The chain runs to 519 residues: Cyclic AMP-responsive element-binding protein 3-like protein 1 (519 aa).

Residues M1–D60 are required for transcriptional activation. Over M1–T374 the chain is Cytoplasmic. Residues L71–S98 are disordered. Residues H86–Q97 show a composition bias toward polar residues. Residue K184 forms a Glycyl lysine isopeptide (Lys-Gly) (interchain with G-Cter in SUMO2) linkage. The segment at D200–P259 is disordered. Positions S210–R223 are enriched in low complexity. Polar residues predominate over residues R236–L246. One can recognise a bZIP domain in the interval A290 to L353. Residues K292–K321 form a basic motif region. Residues L332–L353 are leucine-zipper. A helical; Signal-anchor for type II membrane protein membrane pass occupies residues C375 to P395. The short motif at P392–P395 is the MBTPS2 recognition element. Residues E396–S519 lie on the Lumenal side of the membrane. Positions R423–L426 match the MBTPS1 recognition motif. The tract at residues E484–S519 is disordered. N492 carries an N-linked (GlcNAc...) asparagine glycan. Residues S499–L510 show a composition bias toward basic and acidic residues. An N-linked (GlcNAc...) asparagine glycan is attached at N513.

It belongs to the bZIP family. ATF subfamily. In terms of assembly, interacts with SMAD4, the interaction takes place upon TGFB1 induction and SMAD4 acts as a CREB3L1 coactivator to induce the expression of genes involved in assembly of collagen extracellular matrix. Post-translationally, upon ER stress or DNA damage, translocated to the Golgi apparatus, where it is processed by regulated intramembrane proteolysis (RIP) to release the cytosol-facing N-terminal transcription factor domain. The cleavage is performed sequentially by site-1 and site-2 proteases (S1P/MBTPS1 and S2P/MBTPS2). RIP is induced by TGFB1 and ceramide. N-glycosylated. In terms of processing, ubiquitinated by HRD1/SYVN1; undergoes 'Lys-48'-linked ubiquitination, followed by rapid proteasomal degradation under normal conditions. Upon ER stress, SYVN1 E3 ubiquitin-protein ligase dissociates from its substrate, ubiquitination does not occur and CREB3L1 is stabilized. As to expression, expressed in several tissues, with highest levels in pancreas and prostate. Expressed at relatively lower levels in brain.

Its subcellular location is the endoplasmic reticulum membrane. The protein resides in the nucleus. Functionally, precursor of the transcription factor form (Processed cyclic AMP-responsive element-binding protein 3-like protein 1), which is embedded in the endoplasmic reticulum membrane with N-terminal DNA-binding and transcription activation domains oriented toward the cytosolic face of the membrane. In response to ER stress or DNA damage, transported to the Golgi, where it is cleaved in a site-specific manner by resident proteases S1P/MBTPS1 and S2P/MBTPS2. The released N-terminal cytosolic domain is translocated to the nucleus where it activates transcription of specific target genes involved in the cell-cycle progression inhibition. In terms of biological role, transcription factor involved in cell type specific DNA damage and unfolded protein response (UPR). Binds the DNA consensus sequence 5'-GTGXGCXGC-3'. Plays a critical role in bone formation through the transcription of COL1A1, and possibly COL1A2, and the secretion of bone matrix proteins. Directly binds to the UPR element (UPRE)-like sequence in an osteoblast-specific COL1A1 promoter region and induces its transcription. Does not regulate COL1A1 in other tissues, such as skin. Required to protect astrocytes from ER stress-induced cell death. In astrocytes, binds to the cAMP response element (CRE) of the BiP/HSPA5 promoter and participate in its transcriptional activation. In astrocytes and osteoblasts, upon DNA damage, inhibits cell-cycle progression after G2/M phase by binding to promoters and activating transcription of genes encoding cell-cycle inhibitors, such as p21/CDKN1A. Required for TGFB1 to activate genes involved in the assembly of collagen extracellular matrix. Its function is as follows. (Microbial infection) May play a role in limiting virus spread by inhibiting proliferation of virus-infected cells. Upon infection with diverse DNA and RNA viruses, inhibits cell-cycle progression by binding to promoters and activating transcription of genes encoding cell-cycle inhibitors, such as p21/CDKN1A. The chain is Cyclic AMP-responsive element-binding protein 3-like protein 1 from Homo sapiens (Human).